Consider the following 355-residue polypeptide: Uroporphyrinogen decarboxylase (355 aa).

Residues 27–31 (RQAGR), Phe-46, Asp-77, Tyr-154, Ser-209, and His-327 contribute to the substrate site.

The protein belongs to the uroporphyrinogen decarboxylase family. As to quaternary structure, homodimer.

It is found in the cytoplasm. It carries out the reaction uroporphyrinogen III + 4 H(+) = coproporphyrinogen III + 4 CO2. It functions in the pathway porphyrin-containing compound metabolism; protoporphyrin-IX biosynthesis; coproporphyrinogen-III from 5-aminolevulinate: step 4/4. In terms of biological role, catalyzes the decarboxylation of four acetate groups of uroporphyrinogen-III to yield coproporphyrinogen-III. The sequence is that of Uroporphyrinogen decarboxylase from Nitrosomonas europaea (strain ATCC 19718 / CIP 103999 / KCTC 2705 / NBRC 14298).